The following is a 384-amino-acid chain: Glucose-fructose oxidoreductase domain-containing protein 2 (384 aa).

The N-terminal stretch at 1–25 (MKTLPGIGVFGTGNTARVLISLLRA) is a signal peptide. Residues 358 to 384 (GEWESVELTNDETDSNQNLSEVIQHNL) are disordered. The segment covering 372–384 (SNQNLSEVIQHNL) has biased composition (polar residues).

The protein belongs to the Gfo/Idh/MocA family.

The protein localises to the secreted. It is found in the extracellular space. It localises to the extracellular matrix. In terms of biological role, promotes matrix assembly. The protein is Glucose-fructose oxidoreductase domain-containing protein 2 (gfod2) of Xenopus tropicalis (Western clawed frog).